Consider the following 279-residue polypeptide: Movement protein (279 aa).

Residues 247-279 (ESEELNVESPPAAIGSSSASRSEAFRPQVVNGL) form a disordered region. Residues 254–268 (ESPPAAIGSSSASRS) show a composition bias toward low complexity.

Belongs to the cucumovirus movement protein family.

The protein localises to the host cell junction. It is found in the host plasmodesma. In terms of biological role, transports viral genome to neighboring plant cells directly through plasmosdesmata, without any budding. The movement protein allows efficient cell to cell propagation, by bypassing the host cell wall barrier. Acts by forming a tubular structure at the host plasmodesmata, enlarging it enough to allow free passage of virion capsids. The sequence is that of Movement protein from Cucumis sativus (Cucumber).